Consider the following 639-residue polypeptide: Carbon monoxide dehydrogenase (639 aa).

6 residues coordinate [4Fe-4S] cluster: C41, C49, C50, C53, C58, and C72. Residues H265, C300, C338, C451, C481, and C531 each coordinate [Ni-4Fe-4S] cluster.

The protein belongs to the Ni-containing carbon monoxide dehydrogenase family. Homodimer. The cofactor is [4Fe-4S] cluster. It depends on [Ni-4Fe-4S] cluster as a cofactor.

It is found in the cytoplasm. Its subcellular location is the cell inner membrane. It catalyses the reaction CO + 2 oxidized [2Fe-2S]-[ferredoxin] + H2O = 2 reduced [2Fe-2S]-[ferredoxin] + CO2 + 2 H(+). Its function is as follows. Allows growth in a CO-dependent manner in the dark. CODH oxidizes carbon monoxide coupled, via CooF, to the reduction of a hydrogen cation by a hydrogenase (possibly CooH). In Rhodospirillum rubrum, this protein is Carbon monoxide dehydrogenase (cooS).